We begin with the raw amino-acid sequence, 151 residues long: Nascent polypeptide-associated complex subunit beta (151 aa).

2 disordered regions span residues 1–38 (MDPSKLAKLQAGARIGGKGTPRRKVKKPSKSAMSAADD) and 123–151 (KVSEGEKGADAQADDGEIPDLVEKFDEQD). Residues 20–29 (TPRRKVKKPS) show a composition bias toward basic residues. The 66-residue stretch at 35-100 (AADDKKVQGA…AEEKTLSEIL (66 aa)) folds into the NAC-A/B domain.

This sequence belongs to the NAC-beta family. As to quaternary structure, part of the nascent polypeptide-associated complex (NAC), consisting of ucp15 and btf3. NAC associates with ribosomes via btf3.

It localises to the cytoplasm. The protein localises to the nucleus. Component of the nascent polypeptide-associated complex (NAC), a dynamic component of the ribosomal exit tunnel, protecting the emerging polypeptides from interaction with other cytoplasmic proteins to ensure appropriate nascent protein targeting. The NAC complex also promotes mitochondrial protein import by enhancing productive ribosome interactions with the outer mitochondrial membrane and blocks the inappropriate interaction of ribosomes translating non-secretory nascent polypeptides with translocation sites in the membrane of the endoplasmic reticulum. EGD1 may act as a transcription factor that exert a negative effect on the expression of several genes that are transcribed by RNA polymerase II. The chain is Nascent polypeptide-associated complex subunit beta (btf3) from Schizosaccharomyces pombe (strain 972 / ATCC 24843) (Fission yeast).